The chain runs to 550 residues: Glucose-6-phosphate isomerase 1 (550 aa).

Catalysis depends on Glu358, which acts as the Proton donor. Catalysis depends on residues His389 and Lys513.

Belongs to the GPI family.

The protein resides in the cytoplasm. It carries out the reaction alpha-D-glucose 6-phosphate = beta-D-fructose 6-phosphate. It functions in the pathway carbohydrate biosynthesis; gluconeogenesis. Its pathway is carbohydrate degradation; glycolysis; D-glyceraldehyde 3-phosphate and glycerone phosphate from D-glucose: step 2/4. Functionally, catalyzes the reversible isomerization of glucose-6-phosphate to fructose-6-phosphate. The chain is Glucose-6-phosphate isomerase 1 from Streptomyces coelicolor (strain ATCC BAA-471 / A3(2) / M145).